Reading from the N-terminus, the 472-residue chain is MAGGEAGVTLGQPHLSRQDLATLDVTKLTPLSHEVISRQATINIGTIGHVAHGKSTVVKAISGVHTVRFKNELERNITIKLGYANAKIYKLDDPSCPRPECYRSCGSSTPDEFPTDIPGTKGNFKLVRHVSFVDCPGHDILMATMLNGAAVMDAALLLIAGNESCPQPQTSEHLAAIEIMKLKHILILQNKIDLVKESQAKEQYEQILAFVQGTVAEGAPIIPISAQLKYNIEVVCEYIVKKIPVPPRDFTSEPRLIVIRSFDVNKPGCEVDDLKGGVAGGSILKGVLKVGQEIEVRPGIVSKDSEGKLMCKPIFSKIVSLFAEHNDLQYAAPGGLIGVGTKIDPTLCRADRMVGQVLGAVGALPEIFTELEISYFLLRRLLGVRTEGDKKAAKVQKLSKNEVLMVNIGSLSTGGRVSAVKADLGKIVLTNPVCTEVGEKIALSRRVEKHWRLIGWGQIRRGVTIKPTVDDD.

The residue at position 2 (Ala-2) is an N-acetylalanine. Ser-16 bears the Phosphoserine mark. Residues 39–248 (QATINIGTIG…IVKKIPVPPR (210 aa)) form the tr-type G domain. The interval 48–55 (GHVAHGKS) is G1. 51–56 (AHGKST) contacts GTP. Residues 76 to 80 (NITIK) are G2. The tract at residues 134-137 (DCPG) is G3. Residues 190–193 (NKID) and 225–227 (SAQ) contribute to the GTP site. The tract at residues 190-193 (NKID) is G4. The G5 stretch occupies residues 225–227 (SAQ). Positions 457 to 469 (GQIRRGVTIKPTV) are interacts with Cdc123.

This sequence belongs to the TRAFAC class translation factor GTPase superfamily. Classic translation factor GTPase family. EIF2G subfamily. In terms of assembly, eukaryotic translation initiation factor 2 eIF2 is a heterotrimeric complex composed of an alpha (EIF2S1), a beta (EIF2S2) and a gamma (EIF2S3) chain. eIF2 is member of the 43S pre-initiation complex (43S PIC). Interacts (via C-terminus) with CDC123; the interaction is direct. As to expression, widely expressed.

The protein localises to the cytoplasm. It is found in the cytosol. It carries out the reaction GTP + H2O = GDP + phosphate + H(+). Functionally, member of the eIF2 complex that functions in the early steps of protein synthesis by forming a ternary complex with GTP and initiator tRNA. This complex binds to a 40S ribosomal subunit, followed by mRNA binding to form the 43S pre-initiation complex (43S PIC). Junction of the 60S ribosomal subunit to form the 80S initiation complex is preceded by hydrolysis of the GTP bound to eIF2 and release of an eIF2-GDP binary complex. In order for eIF2 to recycle and catalyze another round of initiation, the GDP bound to eIF2 must exchange with GTP by way of a reaction catalyzed by eIF-2B. Along with its paralog on chromosome Y, may contribute to spermatogenesis up to the round spermatid stage. The polypeptide is Eukaryotic translation initiation factor 2 subunit 3, X-linked (Eif2s3) (Rattus norvegicus (Rat)).